The chain runs to 146 residues: Large ribosomal subunit protein uL15 (146 aa).

The disordered stretch occupies residues 1 to 57; it reads MKLFELQPAPGSKKLPKRKGRGHGTGNGKTAGRGHKGQNARSGGGVRPGFEGGQMPL. A compositionally biased stretch (gly residues) spans 42–52; the sequence is SGGGVRPGFEG.

It belongs to the universal ribosomal protein uL15 family. As to quaternary structure, part of the 50S ribosomal subunit.

In terms of biological role, binds to the 23S rRNA. The sequence is that of Large ribosomal subunit protein uL15 from Acetivibrio thermocellus (strain ATCC 27405 / DSM 1237 / JCM 9322 / NBRC 103400 / NCIMB 10682 / NRRL B-4536 / VPI 7372) (Clostridium thermocellum).